The primary structure comprises 392 residues: Formate-dependent phosphoribosylglycinamide formyltransferase (392 aa).

Residues 20 to 21 and E80 contribute to the N(1)-(5-phospho-beta-D-ribosyl)glycinamide site; that span reads EL. Residues R112, K153, 158–163, 193–196, and E201 each bind ATP; these read SSGKGQ and EEFI. An ATP-grasp domain is found at 117–306; it reads RLAAEELGLP…EFELHVRAIL (190 aa). Mg(2+) contacts are provided by E265 and E277. N(1)-(5-phospho-beta-D-ribosyl)glycinamide is bound by residues D284, K354, and 361 to 362; that span reads RR.

It belongs to the PurK/PurT family. In terms of assembly, homodimer.

The catalysed reaction is N(1)-(5-phospho-beta-D-ribosyl)glycinamide + formate + ATP = N(2)-formyl-N(1)-(5-phospho-beta-D-ribosyl)glycinamide + ADP + phosphate + H(+). The protein operates within purine metabolism; IMP biosynthesis via de novo pathway; N(2)-formyl-N(1)-(5-phospho-D-ribosyl)glycinamide from N(1)-(5-phospho-D-ribosyl)glycinamide (formate route): step 1/1. In terms of biological role, involved in the de novo purine biosynthesis. Catalyzes the transfer of formate to 5-phospho-ribosyl-glycinamide (GAR), producing 5-phospho-ribosyl-N-formylglycinamide (FGAR). Formate is provided by PurU via hydrolysis of 10-formyl-tetrahydrofolate. In Geobacter metallireducens (strain ATCC 53774 / DSM 7210 / GS-15), this protein is Formate-dependent phosphoribosylglycinamide formyltransferase.